A 269-amino-acid chain; its full sequence is Tryptophan synthase alpha chain (269 aa).

Active-site proton acceptor residues include Glu-49 and Asp-60.

This sequence belongs to the TrpA family. As to quaternary structure, tetramer of two alpha and two beta chains.

The catalysed reaction is (1S,2R)-1-C-(indol-3-yl)glycerol 3-phosphate + L-serine = D-glyceraldehyde 3-phosphate + L-tryptophan + H2O. The protein operates within amino-acid biosynthesis; L-tryptophan biosynthesis; L-tryptophan from chorismate: step 5/5. In terms of biological role, the alpha subunit is responsible for the aldol cleavage of indoleglycerol phosphate to indole and glyceraldehyde 3-phosphate. In Azotobacter vinelandii (strain DJ / ATCC BAA-1303), this protein is Tryptophan synthase alpha chain.